Here is a 429-residue protein sequence, read N- to C-terminus: Adenylosuccinate synthetase (429 aa).

Residues 12–18 and 40–42 contribute to the GTP site; these read GDEGKGK and GHT. The active-site Proton acceptor is the Asp-13. Mg(2+) contacts are provided by Asp-13 and Gly-40. IMP contacts are provided by residues 13–16, 38–41, Thr-128, Arg-142, Gln-223, Thr-238, and Arg-302; these read DEGK and NAGH. His-41 acts as the Proton donor in catalysis. Substrate is bound at residue 298-304; the sequence is TTTGRPR. GTP contacts are provided by residues Arg-304, 330–332, and 412–414; these read SID and SVG.

The protein belongs to the adenylosuccinate synthetase family. Homodimer. Mg(2+) is required as a cofactor.

Its subcellular location is the cytoplasm. The enzyme catalyses IMP + L-aspartate + GTP = N(6)-(1,2-dicarboxyethyl)-AMP + GDP + phosphate + 2 H(+). The protein operates within purine metabolism; AMP biosynthesis via de novo pathway; AMP from IMP: step 1/2. Plays an important role in the de novo pathway of purine nucleotide biosynthesis. Catalyzes the first committed step in the biosynthesis of AMP from IMP. This Bacillus cereus (strain ATCC 14579 / DSM 31 / CCUG 7414 / JCM 2152 / NBRC 15305 / NCIMB 9373 / NCTC 2599 / NRRL B-3711) protein is Adenylosuccinate synthetase.